A 218-amino-acid polypeptide reads, in one-letter code: MRDPEFWHNKWAANQIGFHLEDVNPLLIRFWSDLAPKRSEKVLVPLCGKSEDLIWLANQHDSVQGVELSQIAVRSFFAEHFYTPTVTRLNAQHELYQFDELTLFTGDFFTAPVESVDLVYDRAALVALPEEMRAEYAQRVLQLLKPGGRILLVSMDYVQTELSGPPFSVPEAEIRTLFMGCEVRRVYQDTSIDPHLNKRTQAGLSRFAEEVWVIEKSE.

S-adenosyl-L-methionine-binding residues include Trp11, Leu46, Glu67, and Arg122.

This sequence belongs to the class I-like SAM-binding methyltransferase superfamily. TPMT family.

The protein resides in the cytoplasm. It catalyses the reaction S-adenosyl-L-methionine + a thiopurine = S-adenosyl-L-homocysteine + a thiopurine S-methylether.. This chain is Thiopurine S-methyltransferase, found in Vibrio cholerae serotype O1 (strain ATCC 39315 / El Tor Inaba N16961).